The following is a 184-amino-acid chain: Alpha-tubulin N-acetyltransferase (184 aa).

The N-acetyltransferase domain occupies Met1 to Phe174. Acetyl-CoA-binding positions include Phe108 to Leu121 and Ser144 to Lys153.

The protein belongs to the acetyltransferase ATAT1 family.

The catalysed reaction is L-lysyl-[alpha-tubulin] + acetyl-CoA = N(6)-acetyl-L-lysyl-[alpha-tubulin] + CoA + H(+). Functionally, specifically acetylates 'Lys-40' in alpha-tubulin on the lumenal side of microtubules. Promotes microtubule destabilization and accelerates microtubule dynamics; this activity may be independent of acetylation activity. Acetylates alpha-tubulin with a slow enzymatic rate, due to a catalytic site that is not optimized for acetyl transfer. Enters the microtubule through each end and diffuses quickly throughout the lumen of microtubules. Acetylates only long/old microtubules because of its slow acetylation rate since it does not have time to act on dynamically unstable microtubules before the enzyme is released. This chain is Alpha-tubulin N-acetyltransferase, found in Plasmodium vivax (strain Salvador I).